The following is a 1649-amino-acid chain: Cortactin-binding protein 2 (1649 aa).

The segment at M1 to A27 is disordered. Residues A15–E25 are compositionally biased toward low complexity. Residues R118–K275 adopt a coiled-coil conformation. Disordered regions lie at residues P322–N439, G451–R476, and A492–K604. Residues S330 to G342 show a composition bias toward polar residues. The segment covering S395–Q416 has biased composition (low complexity). The span at A492–A503 shows a compositional bias: polar residues. Asymmetric dimethylarginine is present on R495. 6 ANK repeats span residues G699–Y729, D733–A762, N766–H795, G799–I828, D832–G861, and E901–R931. The segment at S1438–R1471 is disordered. Phosphoserine is present on S1510. The tract at residues K1527–K1649 is disordered. The span at S1528–D1546 shows a compositional bias: basic and acidic residues. Polar residues-rich tracts occupy residues S1547 to P1557, P1571 to K1584, and N1621 to N1630. Over residues S1631–K1649 the composition is skewed to basic and acidic residues.

In terms of assembly, interacts with CTTN/cortactin SH3 domain. Interacts with STRN, STRN4/zinedin and MOB4/phocein; this interactions mediate the association with the STRIPAK core complex and may regulate dendritic spine distribution of the STRIPAK complex in hippocampal neurons. Activation of glutamate receptors weakens the interaction with STRN and STRN4.

It is found in the cytoplasm. The protein resides in the cell cortex. Its subcellular location is the cell projection. The protein localises to the dendritic spine. Functionally, regulates the dendritic spine distribution of CTTN/cortactin in hippocampal neurons, and thus controls dendritic spinogenesis and dendritic spine maintenance. Associates with the striatin-interacting phosphatase and kinase (STRIPAK) core complex to regulate dendritic spine distribution of the STRIPAK complex in hippocampal neurons. This Rattus norvegicus (Rat) protein is Cortactin-binding protein 2 (Cttnbp2).